A 208-amino-acid polypeptide reads, in one-letter code: Uracil phosphoribosyltransferase (208 aa).

5-phospho-alpha-D-ribose 1-diphosphate-binding positions include Arg78, Arg103, and 130-138; that span reads DPMLATGVS. Uracil contacts are provided by residues Ile193 and 198–200; that span reads GDA. A 5-phospho-alpha-D-ribose 1-diphosphate-binding site is contributed by Asp199.

The protein belongs to the UPRTase family. The cofactor is Mg(2+).

The enzyme catalyses UMP + diphosphate = 5-phospho-alpha-D-ribose 1-diphosphate + uracil. It functions in the pathway pyrimidine metabolism; UMP biosynthesis via salvage pathway; UMP from uracil: step 1/1. Allosterically activated by GTP. In terms of biological role, catalyzes the conversion of uracil and 5-phospho-alpha-D-ribose 1-diphosphate (PRPP) to UMP and diphosphate. This Thermosipho africanus (strain TCF52B) protein is Uracil phosphoribosyltransferase.